The following is a 544-amino-acid chain: Chaperonin GroEL (544 aa).

ATP contacts are provided by residues 30 to 33 (TLGP), lysine 51, 87 to 91 (DGTTT), glycine 415, and aspartate 495.

Belongs to the chaperonin (HSP60) family. As to quaternary structure, forms a cylinder of 14 subunits composed of two heptameric rings stacked back-to-back. Interacts with the co-chaperonin GroES.

It is found in the cytoplasm. It catalyses the reaction ATP + H2O + a folded polypeptide = ADP + phosphate + an unfolded polypeptide.. Functionally, together with its co-chaperonin GroES, plays an essential role in assisting protein folding. The GroEL-GroES system forms a nano-cage that allows encapsulation of the non-native substrate proteins and provides a physical environment optimized to promote and accelerate protein folding. The polypeptide is Chaperonin GroEL (Methylobacillus flagellatus (strain ATCC 51484 / DSM 6875 / VKM B-1610 / KT)).